The chain runs to 47 residues: MTKGKRTFQPNNRRRARVHGFRLRMRTRAGRSIVSSRRRKGRRTLSA.

The protein belongs to the bacterial ribosomal protein bL34 family.

In Mycobacterium tuberculosis (strain ATCC 25177 / H37Ra), this protein is Large ribosomal subunit protein bL34.